A 129-amino-acid chain; its full sequence is Azurin-1 (129 aa).

Residues 1-129 enclose the Plastocyanin-like domain; it reads AECSVDIAGN…LMKGVLKLVD (129 aa). C3 and C26 are oxidised to a cystine. Cu cation contacts are provided by H46, C112, H117, and M121.

It is found in the periplasm. Functionally, transfers electrons from cytochrome c551 to cytochrome oxidase. This is Azurin-1 from Alcaligenes xylosoxydans xylosoxydans (Achromobacter xylosoxidans).